Reading from the N-terminus, the 278-residue chain is Pantothenate synthetase (278 aa).

30–37 lines the ATP pocket; the sequence is MGFLHEGH. His37 acts as the Proton donor in catalysis. Gln61 contributes to the (R)-pantoate binding site. Gln61 provides a ligand contact to beta-alanine. 147–150 provides a ligand contact to ATP; that stretch reads GQKD. Residue Gln153 coordinates (R)-pantoate. ATP contacts are provided by residues Val176 and 184–187; that span reads LSSR.

The protein belongs to the pantothenate synthetase family. Homodimer.

It localises to the cytoplasm. It carries out the reaction (R)-pantoate + beta-alanine + ATP = (R)-pantothenate + AMP + diphosphate + H(+). It functions in the pathway cofactor biosynthesis; (R)-pantothenate biosynthesis; (R)-pantothenate from (R)-pantoate and beta-alanine: step 1/1. Its function is as follows. Catalyzes the condensation of pantoate with beta-alanine in an ATP-dependent reaction via a pantoyl-adenylate intermediate. This is Pantothenate synthetase from Thermosipho africanus (strain TCF52B).